We begin with the raw amino-acid sequence, 383 residues long: ATP phosphoribosyltransferase regulatory subunit (383 aa).

Belongs to the class-II aminoacyl-tRNA synthetase family. HisZ subfamily. Heteromultimer composed of HisG and HisZ subunits.

It localises to the cytoplasm. Its pathway is amino-acid biosynthesis; L-histidine biosynthesis; L-histidine from 5-phospho-alpha-D-ribose 1-diphosphate: step 1/9. In terms of biological role, required for the first step of histidine biosynthesis. May allow the feedback regulation of ATP phosphoribosyltransferase activity by histidine. This chain is ATP phosphoribosyltransferase regulatory subunit, found in Neisseria gonorrhoeae (strain NCCP11945).